A 366-amino-acid chain; its full sequence is Cyclic amide hydrolase (366 aa).

The tract at residues 1 to 103 (MKVGVHKLAM…TLFTRAPDDG (103 aa)) is RU A. Residues arginine 51 and 82-83 (SG) contribute to the substrate site. The segment at 110–247 (RLALGIGITR…CEVLLFGNAP (138 aa)) is RU B. The active site involves lysine 160. Residues arginine 192, 230-231 (SA), arginine 327, and 346-347 (SG) each bind substrate. The active-site Nucleophile is the serine 230. The RU C stretch occupies residues 253–366 (FRIGHGVLKD…AAPIAAIVRA (114 aa)).

This sequence belongs to the cyclic amide hydrolase (CyAH) family. Homotetramer.

Cyclic amide hydrolase of unknown substrate specificity. Catalyzes the hydrolytic ring-opening of a cyclic amide. Does not act on cyanuric acid nor barbituric acid. This Azorhizobium caulinodans (strain ATCC 43989 / DSM 5975 / JCM 20966 / LMG 6465 / NBRC 14845 / NCIMB 13405 / ORS 571) protein is Cyclic amide hydrolase.